A 157-amino-acid chain; its full sequence is Deoxyuridine 5'-triphosphate nucleotidohydrolase (157 aa).

Residues 73–75 (RSG), asparagine 86, and 90–92 (TID) each bind substrate.

The protein belongs to the dUTPase family. The cofactor is Mg(2+).

The catalysed reaction is dUTP + H2O = dUMP + diphosphate + H(+). It functions in the pathway pyrimidine metabolism; dUMP biosynthesis; dUMP from dCTP (dUTP route): step 2/2. Its function is as follows. This enzyme is involved in nucleotide metabolism: it produces dUMP, the immediate precursor of thymidine nucleotides and it decreases the intracellular concentration of dUTP so that uracil cannot be incorporated into DNA. This chain is Deoxyuridine 5'-triphosphate nucleotidohydrolase, found in Azorhizobium caulinodans (strain ATCC 43989 / DSM 5975 / JCM 20966 / LMG 6465 / NBRC 14845 / NCIMB 13405 / ORS 571).